We begin with the raw amino-acid sequence, 116 residues long: Appetite-regulating hormone (116 aa).

The first 23 residues, 1–23, serve as a signal peptide directing secretion; that stretch reads MPAPRTICSLLLLSMLWMDLAMA. A lipid anchor (O-decanoyl serine; alternate) is attached at S26. Residue S26 is the site of O-hexanoyl serine; alternate attachment. S26 carries O-octanoyl serine; alternate lipidation. A disordered region spans residues 29–67; sequence SPEHQKLQRKEPKKPSGRLKPRALEGQFDPDVGSQEEGA. Residues 31–42 are compositionally biased toward basic and acidic residues; the sequence is EHQKLQRKEPKK. Positions 51-74 are cleaved as a propeptide — removed in mature form; sequence ALEGQFDPDVGSQEEGAEDELEIR. Residue L97 is modified to Leucine amide. Residues 98 to 116 constitute a propeptide, removed in mature form; it reads GKFLQDILWEEAEETLADE.

Belongs to the motilin family. Post-translationally, O-octanoylated by GOAT/MBOAT4. O-octanoylation is essential for ghrelin activity. In terms of processing, amidation of Leu-97 is essential for obestatin activity.

The protein localises to the secreted. Functionally, ghrelin is the ligand for growth hormone secretagogue receptor type 1 (GHSR). Induces the release of growth hormone from the pituitary. Has an appetite-stimulating effect, induces adiposity and stimulates gastric acid secretion. Involved in growth regulation. In terms of biological role, obestatin may be the ligand for GPR39. May have an appetite-reducing effect resulting in decreased food intake. May reduce gastric emptying activity and jejunal motility. The sequence is that of Appetite-regulating hormone (GHRL) from Capra hircus (Goat).